Consider the following 303-residue polypeptide: Olfactory receptor 4X2 (303 aa).

Residues 1-17 lie on the Extracellular side of the membrane; the sequence is MTEFIFLVLSPNQEVQR. The chain crosses the membrane as a helical span at residues 18 to 41; that stretch reads VCFVIFLFLYTAIVLGNFLIVLTV. Residues 42-49 are Cytoplasmic-facing; the sequence is MTSRSLGS. A helical transmembrane segment spans residues 50–71; that stretch reads PMYFFLSYLSFMEICYSSATAP. Residues 72-92 are Extracellular-facing; sequence KLISDLLAERKVISWWGCMAQ. Cys-89 and Cys-181 are joined by a disulfide. A helical membrane pass occupies residues 93–112; that stretch reads LFFLHFFGGTEIFLLTVMAY. The Cytoplasmic portion of the chain corresponds to 113–131; it reads DHYVAICKPLSYTTIMNWQ. Residues 132–150 form a helical membrane-spanning segment; it reads VCTVLVGIAWVGGFMHSFA. Residues 151-187 are Extracellular-facing; sequence QILLIFHLLFCGPNVINHYFCDLVPLLKLACSDTFLI. A helical membrane pass occupies residues 188–211; the sequence is GLLIVANGGTLSVISFGVLLASYM. The Cytoplasmic segment spans residues 212–227; that stretch reads VILLHLRTWSSEGWCK. The helical transmembrane segment at 228-250 threads the bilayer; it reads ALSTCGSHFAVVILFFGPCVFNS. Topologically, residues 251-261 are extracellular; the sequence is LRPSTTLPIDK. The helical transmembrane segment at 262-281 threads the bilayer; sequence MVAVFYTVITAILNPVIYSL. Over 282-303 the chain is Cytoplasmic; the sequence is RNAEMRKAMKRLWIRTLRLNEK.

Belongs to the G-protein coupled receptor 1 family.

The protein localises to the cell membrane. Its function is as follows. Odorant receptor. In Homo sapiens (Human), this protein is Olfactory receptor 4X2 (OR4X2).